We begin with the raw amino-acid sequence, 299 residues long: Sodium/potassium-transporting ATPase subunit beta-2 (299 aa).

Residues 1–36 (MAALTQKKTCSQMMEEWKEFMWNPRTREFMGRTGSS) are Cytoplasmic-facing. The chain crosses the membrane as a helical; Signal-anchor for type II membrane protein span at residues 37–57 (WALILLFYVVFYAFLTAVFSL). Residues 58 to 299 (SLWVMLQTID…VIFTMKIDRL (242 aa)) lie on the Extracellular side of the membrane. N-linked (GlcNAc...) asparagine glycans are attached at residues asparagine 101 and asparagine 119. Cystine bridges form between cysteine 130-cysteine 152 and cysteine 162-cysteine 178. Residues asparagine 199, asparagine 226, asparagine 247, and asparagine 259 are each glycosylated (N-linked (GlcNAc...) asparagine). Cysteine 206 and cysteine 270 are disulfide-bonded.

The protein belongs to the X(+)/potassium ATPases subunit beta family. In terms of assembly, the sodium/potassium-transporting ATPase is composed of a catalytic alpha subunit, an auxiliary non-catalytic beta subunit and an additional regulatory subunit. Expressed at a high level in bladder epithelial cells and eye and at a trace level in kidney; it is not detectable in significant amounts in the stomach, colon and small intestine.

It localises to the cell membrane. Its function is as follows. This is the non-catalytic component of the active enzyme, which catalyzes the hydrolysis of ATP coupled with the exchange of Na(+) and K(+) ions across the plasma membrane. The exact function of this glycoprotein is not known. Some specific sequence of the beta subunit can modulate the activation of the Na,K-pump by extracellular potassium ions. This chain is Sodium/potassium-transporting ATPase subunit beta-2, found in Rhinella marina (Cane toad).